The primary structure comprises 368 residues: Molybdenum import ATP-binding protein ModC (368 aa).

The region spanning 1-230 (MTIKIQFKQT…HAMRPWQSFS (230 aa)) is the ABC transporter domain. Position 32-39 (32-39 (GRSGAGKT)) interacts with ATP. Residues 291–362 (ATSIRNVLPA…VKGVSVTQRD (72 aa)) enclose the Mop domain.

This sequence belongs to the ABC transporter superfamily. Molybdate importer (TC 3.A.1.8) family. In terms of assembly, the complex is composed of two ATP-binding proteins (ModC), two transmembrane proteins (ModB) and a solute-binding protein (ModA).

It is found in the cell inner membrane. It catalyses the reaction molybdate(out) + ATP + H2O = molybdate(in) + ADP + phosphate + H(+). Functionally, part of the ABC transporter complex ModABC involved in molybdenum import. Responsible for energy coupling to the transport system. This is Molybdenum import ATP-binding protein ModC from Vibrio parahaemolyticus serotype O3:K6 (strain RIMD 2210633).